The chain runs to 122 residues: Biogenesis of lysosome-related organelles complex 1 subunit CNL1 (122 aa).

A compositionally biased stretch (basic and acidic residues) spans 1 to 10 (MQDNSSHSRE). Positions 1–21 (MQDNSSHSRESASAGDDPLGI) are disordered. Residues 63-95 (ENTIDKNIAKFKELLEKCDTLENHYEMLNQLAI) adopt a coiled-coil conformation.

Belongs to the BLOC1S4 family. As to quaternary structure, component of the biogenesis of lysosome-related organelles complex-1 (BLOC-1) composed of at least BLI1, BLS1, CNL1, KXD1, SNN1 and VAB2.

The protein resides in the cytoplasm. Functionally, component of the biogenesis of lysosome-related organelles complex-1 (BLOC-1), a complex that is involved in endosomal cargo sorting. The chain is Biogenesis of lysosome-related organelles complex 1 subunit CNL1 (CNL1) from Saccharomyces cerevisiae (strain ATCC 204508 / S288c) (Baker's yeast).